A 184-amino-acid chain; its full sequence is Glutathione-regulated potassium-efflux system ancillary protein KefG (184 aa).

The protein belongs to the NAD(P)H dehydrogenase (quinone) family. KefG subfamily. Interacts with KefB.

The protein localises to the cell inner membrane. The enzyme catalyses a quinone + NADH + H(+) = a quinol + NAD(+). It catalyses the reaction a quinone + NADPH + H(+) = a quinol + NADP(+). In terms of biological role, regulatory subunit of a potassium efflux system that confers protection against electrophiles. Required for full activity of KefB. This is Glutathione-regulated potassium-efflux system ancillary protein KefG from Cronobacter sakazakii (strain ATCC BAA-894) (Enterobacter sakazakii).